A 283-amino-acid polypeptide reads, in one-letter code: Bifunctional protein FolD (283 aa).

NADP(+)-binding positions include 164–166 (GRS), serine 189, and isoleucine 230.

The protein belongs to the tetrahydrofolate dehydrogenase/cyclohydrolase family. In terms of assembly, homodimer.

The enzyme catalyses (6R)-5,10-methylene-5,6,7,8-tetrahydrofolate + NADP(+) = (6R)-5,10-methenyltetrahydrofolate + NADPH. It carries out the reaction (6R)-5,10-methenyltetrahydrofolate + H2O = (6R)-10-formyltetrahydrofolate + H(+). The protein operates within one-carbon metabolism; tetrahydrofolate interconversion. In terms of biological role, catalyzes the oxidation of 5,10-methylenetetrahydrofolate to 5,10-methenyltetrahydrofolate and then the hydrolysis of 5,10-methenyltetrahydrofolate to 10-formyltetrahydrofolate. In Lactobacillus delbrueckii subsp. bulgaricus (strain ATCC 11842 / DSM 20081 / BCRC 10696 / JCM 1002 / NBRC 13953 / NCIMB 11778 / NCTC 12712 / WDCM 00102 / Lb 14), this protein is Bifunctional protein FolD.